We begin with the raw amino-acid sequence, 325 residues long: Phage-like element PBSX protein XkdQ (325 aa).

The protein to B.subtilis YqbQ.

In Bacillus subtilis (strain 168), this protein is Phage-like element PBSX protein XkdQ (xkdQ).